Here is a 449-residue protein sequence, read N- to C-terminus: Interferon-related developmental regulator 1 (449 aa).

Basic residues predominate over residues 1-10 (MPKNKKRNAP). Residues 1-42 (MPKNKKRNAPHRGGGGGGGSGAATSAATAGGPHRTVQPFSDE) are disordered. Positions 12–21 (RGGGGGGGSG) are enriched in gly residues. A compositionally biased stretch (low complexity) spans 22–31 (AATSAATAGG).

This sequence belongs to the IFRD family. As to quaternary structure, interacts with PSIP1/LEDGF.

In terms of biological role, could play a role in regulating gene activity in the proliferative and/or differentiative pathways induced by NGF. May be an autocrine factor that attenuates or amplifies the initial ligand-induced signal. The chain is Interferon-related developmental regulator 1 (Ifrd1) from Mus musculus (Mouse).